Consider the following 103-residue polypeptide: UPF0145 protein Dred_2155 (103 aa).

Belongs to the UPF0145 family.

The sequence is that of UPF0145 protein Dred_2155 from Desulforamulus reducens (strain ATCC BAA-1160 / DSM 100696 / MI-1) (Desulfotomaculum reducens).